The chain runs to 288 residues: tRNA-cytidine(32) 2-sulfurtransferase (288 aa).

The PP-loop motif signature appears at 70 to 75 (SGGKDS). Residues Cys145, Cys148, and Cys236 each coordinate [4Fe-4S] cluster.

Belongs to the TtcA family. In terms of assembly, homodimer. Mg(2+) serves as cofactor. [4Fe-4S] cluster is required as a cofactor.

The protein resides in the cytoplasm. The enzyme catalyses cytidine(32) in tRNA + S-sulfanyl-L-cysteinyl-[cysteine desulfurase] + AH2 + ATP = 2-thiocytidine(32) in tRNA + L-cysteinyl-[cysteine desulfurase] + A + AMP + diphosphate + H(+). It functions in the pathway tRNA modification. Its function is as follows. Catalyzes the ATP-dependent 2-thiolation of cytidine in position 32 of tRNA, to form 2-thiocytidine (s(2)C32). The sulfur atoms are provided by the cysteine/cysteine desulfurase (IscS) system. This chain is tRNA-cytidine(32) 2-sulfurtransferase, found in Bartonella tribocorum (strain CIP 105476 / IBS 506).